Reading from the N-terminus, the 548-residue chain is Chaperonin GroEL (548 aa).

Residues 30–33, lysine 51, 87–91, glycine 415, 479–481, and aspartate 495 each bind ATP; these read TLGP, DGTTT, and NAA. The tract at residues 524–548 is disordered; it reads LPKEDKSSDSSSSPAGGMGGMGGMM. Over residues 539-548 the composition is skewed to gly residues; sequence GGMGGMGGMM.

Belongs to the chaperonin (HSP60) family. As to quaternary structure, forms a cylinder of 14 subunits composed of two heptameric rings stacked back-to-back. Interacts with the co-chaperonin GroES.

The protein localises to the cytoplasm. The enzyme catalyses ATP + H2O + a folded polypeptide = ADP + phosphate + an unfolded polypeptide.. Functionally, together with its co-chaperonin GroES, plays an essential role in assisting protein folding. The GroEL-GroES system forms a nano-cage that allows encapsulation of the non-native substrate proteins and provides a physical environment optimized to promote and accelerate protein folding. This is Chaperonin GroEL from Buchnera aphidicola subsp. Acyrthosiphon pisum (strain Tuc7).